The chain runs to 174 residues: Probable adenylyl-sulfate kinase (174 aa).

Residue 10–17 (GPSGAGKT) participates in ATP binding. The active-site Phosphoserine intermediate is serine 84.

The protein belongs to the APS kinase family.

It catalyses the reaction adenosine 5'-phosphosulfate + ATP = 3'-phosphoadenylyl sulfate + ADP + H(+). It participates in sulfur metabolism; hydrogen sulfide biosynthesis; sulfite from sulfate: step 2/3. Its function is as follows. Catalyzes the synthesis of activated sulfate. The sequence is that of Probable adenylyl-sulfate kinase (cysC) from Pyrococcus abyssi (strain GE5 / Orsay).